We begin with the raw amino-acid sequence, 198 residues long: Ribosome maturation factor RimP (198 aa).

Belongs to the RimP family.

The protein localises to the cytoplasm. Its function is as follows. Required for maturation of 30S ribosomal subunits. The protein is Ribosome maturation factor RimP of Rhizobium rhizogenes (strain K84 / ATCC BAA-868) (Agrobacterium radiobacter).